The sequence spans 299 residues: MKVLCTVLVVTLLAGCRADVEPEPEVLEPAVWKSGQPWELALGRFWDYVRWVQTLSDQVQEELLSSQVTQELTVLMEDTMKAVKAYKSELEQELVPMAEDTKARLSKELQAAQARLGADMEEVRNRLALYRNEMQAMLGQSAEELRARLASHLRKLRKRMLRDAEDLQKRLAVYKDGASEGAERGVSAIRERLGSLVEQSRVRAALTSQPLQERAQAWGKQLRGRLEEVRGQAQDRLEEVREQMEEVRVKIEEQAEAFQARLKGWFEPMVEDMRRQWADLIEKVQAAVGASTPAPTQNP.

An N-terminal signal peptide occupies residues Met1 to Ala18. Positions Val74–Glu245 are 8 X 22 AA approximate tandem repeats. A run of 8 repeats spans residues Leu75–Val95, Pro96–Gly117, Ala118–Gly139, Gln140–Leu161, Arg162–Glu183, Arg184–Leu206, Thr207–Arg225, and Gly224–Glu242. Met137 carries the methionine sulfoxide modification. A Phosphoserine modification is found at Ser141. An LDL and other lipoprotein receptors binding region spans residues His152–Arg162. Leu156–Arg159 lines the heparin pocket. The lipid-binding and lipoprotein association stretch occupies residues Ala205 to Met273. Residue Gly219–Leu226 coordinates heparin. The tract at residues Arg261 to Met273 is specificity for association with VLDL.

This sequence belongs to the apolipoprotein A1/A4/E family. In terms of assembly, homotetramer. May interact with ABCA1; functionally associated with ABCA1 in the biogenesis of HDLs. May interact with APP/A4 amyloid-beta peptide; the interaction is extremely stable in vitro but its physiological significance is unclear. May interact with MAPT. May interact with MAP2. In the cerebrospinal fluid, interacts with secreted SORL1. Interacts with PMEL; this allows the loading of PMEL luminal fragment on ILVs to induce fibril nucleation. In terms of processing, APOE exists as multiple glycosylated and sialylated glycoforms within cells and in plasma. The extent of glycosylation and sialylation are tissue and context specific. Post-translationally, glycated in plasma VLDL. Phosphorylated by FAM20C in the extracellular medium.

Its subcellular location is the secreted. The protein resides in the extracellular space. It localises to the extracellular matrix. It is found in the extracellular vesicle. The protein localises to the endosome. Its subcellular location is the multivesicular body. Its function is as follows. APOE is an apolipoprotein, a protein associating with lipid particles, that mainly functions in lipoprotein-mediated lipid transport between organs via the plasma and interstitial fluids. APOE is a core component of plasma lipoproteins and is involved in their production, conversion and clearance. Apolipoproteins are amphipathic molecules that interact both with lipids of the lipoprotein particle core and the aqueous environment of the plasma. As such, APOE associates with chylomicrons, chylomicron remnants, very low density lipoproteins (VLDL) and intermediate density lipoproteins (IDL) but shows a preferential binding to high-density lipoproteins (HDL). It also binds a wide range of cellular receptors including the LDL receptor/LDLR, the LDL receptor-related proteins LRP1, LRP2 and LRP8 and the very low-density lipoprotein receptor/VLDLR that mediate the cellular uptake of the APOE-containing lipoprotein particles. Finally, APOE also has a heparin-binding activity and binds heparan-sulfate proteoglycans on the surface of cells, a property that supports the capture and the receptor-mediated uptake of APOE-containing lipoproteins by cells. A main function of APOE is to mediate lipoprotein clearance through the uptake of chylomicrons, VLDLs, and HDLs by hepatocytes. APOE is also involved in the biosynthesis by the liver of VLDLs as well as their uptake by peripheral tissues ensuring the delivery of triglycerides and energy storage in muscle, heart and adipose tissues. By participating in the lipoprotein-mediated distribution of lipids among tissues, APOE plays a critical role in plasma and tissues lipid homeostasis. APOE is also involved in two steps of reverse cholesterol transport, the HDLs-mediated transport of cholesterol from peripheral tissues to the liver, and thereby plays an important role in cholesterol homeostasis. First, it is functionally associated with ABCA1 in the biogenesis of HDLs in tissues. Second, it is enriched in circulating HDLs and mediates their uptake by hepatocytes. APOE also plays an important role in lipid transport in the central nervous system, regulating neuron survival and sprouting. This is Apolipoprotein E (Apoe) from Tympanoctomys barrerae (Plains viscacha rat).